Here is a 339-residue protein sequence, read N- to C-terminus: Thymidine kinase (339 aa).

11–18 (GAFGIGKT) is a binding site for ATP. Glu39 serves as the catalytic Proton acceptor. Substrate contacts are provided by Tyr59 and Gln83. Residue Arg176 coordinates ATP. Arg182 serves as a coordination point for substrate.

This sequence belongs to the herpesviridae thymidine kinase family. As to quaternary structure, homodimer.

The enzyme catalyses thymidine + ATP = dTMP + ADP + H(+). Its function is as follows. Catalyzes the transfer of the gamma-phospho group of ATP to thymidine to generate dTMP in the salvage pathway of pyrimidine synthesis. The dTMP serves as a substrate for DNA polymerase during viral DNA replication. Allows the virus to be reactivated and to grow in non-proliferative cells lacking a high concentration of phosphorylated nucleic acid precursors. The protein is Thymidine kinase of Amazona oratrix (yellow-headed parrot).